A 604-amino-acid polypeptide reads, in one-letter code: MTDAPVKRIRNFCIIAHIDHGKSTLADRLLQDTGTVANRDMQEQFLDNMELERERGITIKLQAARMKYKAADGEEYVLNLIDTPGHVDFSYEVSRSLQACEGALLVVDASQGVEAQTLANVYMALENDLEIIPVLNKIDLPGADPDRIKEEIEAIIGLDCSNAIPCSAKTGLGVPEILQSVVDRVPPPADTVKEPTKALIFDSYYDPYRGVIVYFRVMSGSISRKDKVLLMASNKTYELDEVGIMAPDEKKVDELHAGEVGYLAASIKAVADARVGDTITLLNEPADAPLPGYAEAKPMVFCGLFPTEADQYPDLREALHKLQLSDAALKFEPETSSAMGFGFRCGFLGLLHMEIVQERLEREYNLDLIVTAPSVIYNVNLTNGEQILVDNPATLPDPQQRESIEEPYVRMEIYAPNDFNGALMGLCQERRGEYLDMKYITKERVTLIYELPLAEVVTDFFDQMKTRTQGYASMEYHLIGYRKNELVRLDVLINAERADPLTTIVHRDKAYNVGKGLVEKLKELIPRQQFKIPLQASIGSRIIASTSISAIRKDVLAKCYGGDISRKKKLLKKQAKGKKRMKAMGKVDVPQEAFMAVLKLNQTP.

The 183-residue stretch at 7–189 folds into the tr-type G domain; it reads KRIRNFCIIA…SVVDRVPPPA (183 aa). Residues 19 to 24 and 136 to 139 contribute to the GTP site; these read DHGKST and NKID.

It belongs to the TRAFAC class translation factor GTPase superfamily. Classic translation factor GTPase family. LepA subfamily.

The protein localises to the cell inner membrane. The enzyme catalyses GTP + H2O = GDP + phosphate + H(+). Functionally, required for accurate and efficient protein synthesis under certain stress conditions. May act as a fidelity factor of the translation reaction, by catalyzing a one-codon backward translocation of tRNAs on improperly translocated ribosomes. Back-translocation proceeds from a post-translocation (POST) complex to a pre-translocation (PRE) complex, thus giving elongation factor G a second chance to translocate the tRNAs correctly. Binds to ribosomes in a GTP-dependent manner. The polypeptide is Elongation factor 4 (Synechococcus sp. (strain CC9311)).